The primary structure comprises 222 residues: MAIIMTESSYERRVKALYEKQIRMEALEAKFIKKVYKFNSNLWDVKEAACRHQRKVGKLQKVIMERREELDKRVSFIEELDRELEATKLRSLAMKDRIKQQKMLARQRKNEIMESIHTLSKTTGTYINQEALPARVKGVTVLRGDKRNQLIPFDLKSTDVEGLDSLCQHLESLNVDMAQWQQLISLAMDVAMESRAPTTPPKEAANCNSIIEIDLTSPTCHI.

The stretch at 51–100 (RHQRKVGKLQKVIMERREELDKRVSFIEELDRELEATKLRSLAMKDRIKQ) forms a coiled coil.

It belongs to the SPC25 family. As to quaternary structure, component of the Ndc80 complex, which is composed of Ndc80, Nuf2 and Spc25.

The protein localises to the nucleus. Its subcellular location is the chromosome. It localises to the centromere. The protein resides in the kinetochore. Functionally, acts as a component of the essential kinetochore-associated Ndc80 complex, which is required for chromosome segregation and spindle checkpoint activity during meiosis and mitosis. Required for kinetochore integrity and the organization of stable microtubule binding sites in the outer plate of the kinetochore. Participates in SAC signaling that responds specifically to disruptions in spindle microtubule dynamics. The NDC80 complex synergistically enhances the affinity of the SKA1 complex for microtubules and may allow the NDC80 complex to track depolymerizing microtubules. In Drosophila sechellia (Fruit fly), this protein is Kinetochore protein Spc25.